The primary structure comprises 186 residues: Transcription factor FapR (186 aa).

The 71-residue stretch at 98–168 (FTKTQIARGH…YVIEVNSYVR (71 aa)) folds into the MaoC-like domain.

Belongs to the FapR family.

Transcriptional factor involved in regulation of membrane lipid biosynthesis by repressing genes involved in fatty acid and phospholipid metabolism. The protein is Transcription factor FapR of Staphylococcus haemolyticus (strain JCSC1435).